We begin with the raw amino-acid sequence, 355 residues long: Aminopeptidase N (355 aa).

Residues Glu156 and 290–294 contribute to the substrate site; that span reads GAMEN. Position 326 (His326) interacts with Zn(2+). The active-site Proton acceptor is the Glu327. The Zn(2+) site is built by His330 and Glu349. Glu349 provides a ligand contact to substrate.

It belongs to the peptidase M1 family. Zn(2+) serves as cofactor.

Its subcellular location is the cytoplasm. The catalysed reaction is Release of an N-terminal amino acid, Xaa-|-Yaa- from a peptide, amide or arylamide. Xaa is preferably Ala, but may be most amino acids including Pro (slow action). When a terminal hydrophobic residue is followed by a prolyl residue, the two may be released as an intact Xaa-Pro dipeptide.. In terms of biological role, aminopeptidase N is involved in the degradation of intracellular peptides generated by protein breakdown during normal growth as well as in response to nutrient starvation. The polypeptide is Aminopeptidase N (pepN) (Acetobacter pasteurianus (Acetobacter turbidans)).